Consider the following 117-residue polypeptide: MTRIRRGYIARRRRTKIRLFASSFRGARSRLTRTIIQQKIRSLVSSHRDRDRKKIDFRRLWITRINAVIRGNRVSYSYSRLIHNLYKRQLLLNRKILAQIAILNRNCLYMISNEIRS.

The protein belongs to the bacterial ribosomal protein bL20 family.

It is found in the plastid. It localises to the chloroplast. Functionally, binds directly to 23S ribosomal RNA and is necessary for the in vitro assembly process of the 50S ribosomal subunit. It is not involved in the protein synthesizing functions of that subunit. The polypeptide is Large ribosomal subunit protein bL20c (Eucalyptus globulus subsp. globulus (Tasmanian blue gum)).